A 320-amino-acid chain; its full sequence is 1,5-anhydro-D-fructose reductase (320 aa).

Asp35 is a binding site for NADP(+). Catalysis depends on Tyr40, which acts as the Proton donor. His102 is a binding site for substrate. Residues Gln194 and 265–277 (IPGS…IKEN) each bind NADP(+).

The protein belongs to the aldo/keto reductase family. In terms of assembly, monomer. As to expression, specifically expressed in testis. Expressed in testicular germ cells and testis interstitial cells.

It localises to the cytoplasm. It catalyses the reaction 1,5-anhydro-D-glucitol + NADP(+) = 1,5-anhydro-D-fructose + NADPH + H(+). With respect to regulation, inhibited by p-chloromercuribenzoic acid and alkyliodines. In terms of biological role, catalyzes the NADPH-dependent reduction of 1,5-anhydro-D-fructose (AF) to 1,5-anhydro-D-glucitol. Has low NADPH-dependent reductase activity towards 9,10-phenanthrenequinone (in vitro). This Homo sapiens (Human) protein is 1,5-anhydro-D-fructose reductase (AKR1E2).